The primary structure comprises 211 residues: Uridine kinase (211 aa).

12–19 (GGSGGGKT) contacts ATP.

The protein belongs to the uridine kinase family.

The protein resides in the cytoplasm. It carries out the reaction uridine + ATP = UMP + ADP + H(+). It catalyses the reaction cytidine + ATP = CMP + ADP + H(+). It participates in pyrimidine metabolism; CTP biosynthesis via salvage pathway; CTP from cytidine: step 1/3. The protein operates within pyrimidine metabolism; UMP biosynthesis via salvage pathway; UMP from uridine: step 1/1. This is Uridine kinase from Streptococcus thermophilus (strain CNRZ 1066).